The following is a 318-amino-acid chain: Mitochondrial coenzyme A transporter SLC25A42 (318 aa).

3 Solcar repeats span residues 31–117 (RQVL…YKRI), 129–214 (LPPW…LKSL), and 224–312 (PYPF…MQIL). The next 6 membrane-spanning stretches (helical) occupy residues 33–53 (VLSS…AVAP), 89–109 (LWRG…IQFS), 135–155 (LLAG…LDLV), 186–206 (LYFG…LSFF), 230–250 (MVFG…LDVV), and 293–313 (LKGP…QILL).

It belongs to the mitochondrial carrier (TC 2.A.29) family. In terms of tissue distribution, widely expressed. Highly expressed in adipose, followed by hypothalamus and brain coronal sections containing corpus callosum, fornix, thalamus, hypothalamus, optic chiasm, pons, midbrain, and cerebellum.

Its subcellular location is the mitochondrion inner membrane. It catalyses the reaction ADP(out) + CoA(in) = ADP(in) + CoA(out). It carries out the reaction 3'-dephospho-CoA(in) + ADP(out) = 3'-dephospho-CoA(out) + ADP(in). The enzyme catalyses adenosine 3',5'-bisphosphate(in) + ADP(out) = adenosine 3',5'-bisphosphate(out) + ADP(in). The catalysed reaction is AMP(in) + ADP(out) = AMP(out) + ADP(in). It catalyses the reaction dADP(in) + ADP(out) = dADP(out) + ADP(in). It carries out the reaction ADP(in) + ATP(out) = ADP(out) + ATP(in). Its function is as follows. Mitochondrial carrier mediating the transport of coenzyme A (CoA) in mitochondria in exchange for intramitochondrial (deoxy)adenine nucleotides and adenosine 3',5'-diphosphate. In Rattus norvegicus (Rat), this protein is Mitochondrial coenzyme A transporter SLC25A42 (Slc25a42).